Consider the following 652-residue polypeptide: Regulator of DNA class I crossover intermediates 1 (652 aa).

Positions 1-228 (MNWVGGSRSR…APYKRTNSSE (228 aa)) form a DNA-binding region, binds DNA containing a D-loop. Disordered regions lie at residues 464–512 (YLES…KATE) and 621–652 (EKESSHPEAGSCTEDRTADTTGGQETPTSNSL). A compositionally biased stretch (low complexity) spans 467 to 477 (SSQSSQSASYS). 2 stretches are compositionally biased toward polar residues: residues 478–491 (PRPTESTFSSSTDL) and 639–652 (DTTGGQETPTSNSL).

As to quaternary structure, interacts with MSH5. Interacts with TEX11. As to expression, expressed mainly in testis (at protein level). Expressed in spermatogonia and enriched in spermatocytes; absent in testicular somatic cells (at protein level). No expression or low levels in other tissues.

The protein localises to the chromosome. Functionally, involved in recombination, probably acting by stabilizing recombination intermediates during meiotic crossover formation. Required for normal germline development and fertility. Required for meiotic progression, complete chromosomal synapsis and crossover formation. Binds double-stranded DNA. However, also binds branched DNA molecules, such as those containing a D-loop or Holliday junction structure. Probably not required for formation of DNA double-strand breaks (DSBs). Also binds RNA in an RNA structure-independent manner, with a preference for binding 3'-UTR regions of mRNAs; may stabilize bound RNAs. In Mus musculus (Mouse), this protein is Regulator of DNA class I crossover intermediates 1.